A 733-amino-acid chain; its full sequence is Neutral ceramidase 3 (733 aa).

Positions 1-25 (MTRWSMSMHCTLFLLFLLRLTCIFS) are cleaved as a signal peptide. The Nucleophile role is filled by Ser307. Residue Asn325 is glycosylated (N-linked (GlcNAc...) asparagine).

It belongs to the neutral ceramidase family.

The protein localises to the secreted. It is found in the endoplasmic reticulum. The protein resides in the golgi apparatus. It carries out the reaction an N-acylsphing-4-enine + H2O = sphing-4-enine + a fatty acid. Functionally, hydrolyzes the sphingolipid ceramide into sphingosine and free fatty acid. Promotes oxidative stress resistance. This Arabidopsis thaliana (Mouse-ear cress) protein is Neutral ceramidase 3.